We begin with the raw amino-acid sequence, 26 residues long: Aldehyde dehydrogenase beta chain (26 aa).

As to quaternary structure, heterotrimer composed of an alpha, a beta and a gamma chain. FAD is required as a cofactor.

It catalyses the reaction an aldehyde + a quinone + H2O = a quinol + a carboxylate + H(+). This chain is Aldehyde dehydrogenase beta chain, found in Amycolatopsis methanolica.